Here is a 45-residue protein sequence, read N- to C-terminus: MEGGMAAYPVATRESRCRRGRIGVQPSPERRSEVVGPFPLARSLS.

The disordered stretch occupies residues 18–45; the sequence is RRGRIGVQPSPERRSEVVGPFPLARSLS.

This is an uncharacterized protein from Homo sapiens (Human).